We begin with the raw amino-acid sequence, 360 residues long: tRNA (guanine-N(7)-)-methyltransferase (360 aa).

A disordered region spans residues 1–32 (MTPPPPKRQKRDEYRKATAEAASQPGPSDVAE). S-adenosyl-L-methionine is bound by residues Gly99 and 122–123 (EI). The interval 177 to 196 (ADAASPVLSTDTEHTPTTLV) is disordered. Residues 183 to 196 (VLSTDTEHTPTTLV) are compositionally biased toward polar residues. S-adenosyl-L-methionine contacts are provided by residues 209-210 (NT) and Cys229. Asp232 is an active-site residue. An S-adenosyl-L-methionine-binding site is contributed by 332 to 334 (TEE).

It belongs to the class I-like SAM-binding methyltransferase superfamily. TrmB family. As to quaternary structure, forms a complex with trm82.

It is found in the nucleus. The catalysed reaction is guanosine(46) in tRNA + S-adenosyl-L-methionine = N(7)-methylguanosine(46) in tRNA + S-adenosyl-L-homocysteine. Its pathway is tRNA modification; N(7)-methylguanine-tRNA biosynthesis. Catalyzes the formation of N(7)-methylguanine at position 46 (m7G46) in tRNA. The sequence is that of tRNA (guanine-N(7)-)-methyltransferase (trm8) from Neosartorya fischeri (strain ATCC 1020 / DSM 3700 / CBS 544.65 / FGSC A1164 / JCM 1740 / NRRL 181 / WB 181) (Aspergillus fischerianus).